A 278-amino-acid chain; its full sequence is Pyrroline-5-carboxylate reductase 2 (278 aa).

Belongs to the pyrroline-5-carboxylate reductase family.

The protein localises to the cytoplasm. The enzyme catalyses L-proline + NADP(+) = (S)-1-pyrroline-5-carboxylate + NADPH + 2 H(+). The catalysed reaction is L-proline + NAD(+) = (S)-1-pyrroline-5-carboxylate + NADH + 2 H(+). It participates in amino-acid biosynthesis; L-proline biosynthesis; L-proline from L-glutamate 5-semialdehyde: step 1/1. Its function is as follows. Catalyzes the reduction of 1-pyrroline-5-carboxylate (PCA) to L-proline. This Bacillus subtilis (strain 168) protein is Pyrroline-5-carboxylate reductase 2 (proI).